Here is a 612-residue protein sequence, read N- to C-terminus: GPI mannosyltransferase 3 (612 aa).

2 helical membrane-spanning segments follow: residues 92-112 and 145-165; these read LLAI…AGLM and VIYA…YFTI. Asn-188 is a glycosylation site (N-linked (GlcNAc...) asparagine). Transmembrane regions (helical) follow at residues 192-212, 254-274, and 288-308; these read IALL…RTFI, RPSN…NLLL, and ILVV…YFYN. Asn-321 carries an N-linked (GlcNAc...) asparagine glycan. Residues 339–359 traverse the membrane as a helical segment; it reads LLQSLPIMLGYSLPLFIYGLF. A glycan (N-linked (GlcNAc...) asparagine) is linked at Asn-361. Transmembrane regions (helical) follow at residues 371 to 391, 398 to 418, and 429 to 449; these read FGAL…YSYL, FIYP…LKLA, and EYVW…TTFQ. Asn-508, Asn-526, and Asn-550 each carry an N-linked (GlcNAc...) asparagine glycan.

Belongs to the glycosyltransferase 22 family. PIGB subfamily.

Its subcellular location is the endoplasmic reticulum membrane. The protein operates within glycolipid biosynthesis; glycosylphosphatidylinositol-anchor biosynthesis. Its function is as follows. Mannosyltransferase involved in glycosylphosphatidylinositol-anchor biosynthesis. Transfers the third mannose to Man2-GlcN-acyl-PI during GPI precursor assembly. The protein is GPI mannosyltransferase 3 (GPI10) of Candida glabrata (strain ATCC 2001 / BCRC 20586 / JCM 3761 / NBRC 0622 / NRRL Y-65 / CBS 138) (Yeast).